A 245-amino-acid polypeptide reads, in one-letter code: MSHTKIMSTDQLETQITELDNLPEHREIVTFMRRSAPLNTSQRSALEQYQDLILEYPVGDLRQHFEHPEHPLTVEIGFGMGRSLVLMAKAHPERNFVGIEVHVPGIAQCVYEAGMAGLKNLRVLDADAIQVLREMPDNSINCVQLYFPDPWQKKRHFKRRFVIHERMQLVEQKLELGGTFHAATDWEPYAEWMLDVLDNRPALENLAGKGNSYPRPEWRPQTKFERRGIESGHKINDFIFKKIGS.

Residues glutamate 75, glutamate 100, aspartate 127, and aspartate 149 each coordinate S-adenosyl-L-methionine. Residue aspartate 149 is part of the active site. Substrate contacts are provided by residues lysine 153, aspartate 185, and 222-225; that span reads TKFE.

The protein belongs to the class I-like SAM-binding methyltransferase superfamily. TrmB family.

It carries out the reaction guanosine(46) in tRNA + S-adenosyl-L-methionine = N(7)-methylguanosine(46) in tRNA + S-adenosyl-L-homocysteine. Its pathway is tRNA modification; N(7)-methylguanine-tRNA biosynthesis. Functionally, catalyzes the formation of N(7)-methylguanine at position 46 (m7G46) in tRNA. The sequence is that of tRNA (guanine-N(7)-)-methyltransferase from Acinetobacter baylyi (strain ATCC 33305 / BD413 / ADP1).